Reading from the N-terminus, the 323-residue chain is Sphingolipid delta(4)-desaturase DES1 (323 aa).

Gly2 carries the N-myristoyl glycine lipid modification. Transmembrane regions (helical) follow at residues 41 to 61 (SNLI…FYLV) and 68 to 88 (WVLF…TLAI). The Histidine box-1 motif lies at 89-93 (HEVSH). Residues 102–122 (AMWNRWFGIFANLPIGVPYSV) traverse the membrane as a helical segment. Positions 128 to 132 (HMDHH) match the Histidine box-2 motif. A run of 3 helical transmembrane segments spans residues 152 to 172 (FFCT…FYAF), 184 to 204 (YLEI…YYVL), and 209 to 229 (LVYM…SGHF). Positions 259–263 (HNEHH) match the Histidine box-3 motif. Residue Ser307 is modified to Phosphoserine.

This sequence belongs to the fatty acid desaturase type 1 family. DEGS subfamily. In terms of assembly, interacts with RLBP1; the interaction increases synthesis of chromophore-precursors by DEGS1. Myristoylation can target the enzyme to the mitochondria leading to an increase in ceramide levels.

Its subcellular location is the mitochondrion membrane. It is found in the endoplasmic reticulum membrane. The catalysed reaction is an N-acylsphinganine + 2 Fe(II)-[cytochrome b5] + O2 + 2 H(+) = an N-acylsphing-4-enine + 2 Fe(III)-[cytochrome b5] + 2 H2O. The enzyme catalyses all-trans-retinol = 11-cis-retinol. It carries out the reaction all-trans-retinol = 9-cis-retinol. It catalyses the reaction all-trans-retinol = 13-cis-retinol. The catalysed reaction is 11-cis-retinol = 13-cis-retinol. The enzyme catalyses 11-cis-retinol = 9-cis-retinol. Its function is as follows. Has sphingolipid-delta-4-desaturase activity. Converts D-erythro-sphinganine to D-erythro-sphingosine (E-sphing-4-enine). Catalyzes the equilibrium isomerization of retinols. This Bos taurus (Bovine) protein is Sphingolipid delta(4)-desaturase DES1 (DEGS1).